Here is a 292-residue protein sequence, read N- to C-terminus: Ribonuclease HIII (292 aa).

Residues 76-292 (TNLIGTDEVG…TQKAIKIAQL (217 aa)) enclose the RNase H type-2 domain. A divalent metal cation contacts are provided by Asp82, Glu83, and Asp186.

This sequence belongs to the RNase HII family. RnhC subfamily. The cofactor is Mn(2+). Requires Mg(2+) as cofactor.

The protein localises to the cytoplasm. The catalysed reaction is Endonucleolytic cleavage to 5'-phosphomonoester.. In terms of biological role, endonuclease that specifically degrades the RNA of RNA-DNA hybrids. The chain is Ribonuclease HIII from Lactococcus lactis subsp. lactis (strain IL1403) (Streptococcus lactis).